The primary structure comprises 219 residues: tRNA (guanine-N(7)-)-methyltransferase (219 aa).

S-adenosyl-L-methionine-binding residues include Glu46, Glu71, Asn100, and Asp122. Asp122 is an active-site residue. Residues Lys126, Asp158, and 199-202 (TEYE) each bind substrate.

It belongs to the class I-like SAM-binding methyltransferase superfamily. TrmB family.

The catalysed reaction is guanosine(46) in tRNA + S-adenosyl-L-methionine = N(7)-methylguanosine(46) in tRNA + S-adenosyl-L-homocysteine. It functions in the pathway tRNA modification; N(7)-methylguanine-tRNA biosynthesis. In terms of biological role, catalyzes the formation of N(7)-methylguanine at position 46 (m7G46) in tRNA. The chain is tRNA (guanine-N(7)-)-methyltransferase from Leuconostoc mesenteroides subsp. mesenteroides (strain ATCC 8293 / DSM 20343 / BCRC 11652 / CCM 1803 / JCM 6124 / NCDO 523 / NBRC 100496 / NCIMB 8023 / NCTC 12954 / NRRL B-1118 / 37Y).